We begin with the raw amino-acid sequence, 85 residues long: Putative membrane protein insertion efficiency factor (85 aa).

This sequence belongs to the UPF0161 family.

The protein resides in the cell inner membrane. In terms of biological role, could be involved in insertion of integral membrane proteins into the membrane. This chain is Putative membrane protein insertion efficiency factor, found in Shewanella woodyi (strain ATCC 51908 / MS32).